A 159-amino-acid polypeptide reads, in one-letter code: Keratin-associated protein 9-8 (159 aa).

15 consecutive repeat copies span residues 8 to 12 (CCQPT), 13 to 17 (CCRTT), 32 to 36 (CCQPS), 37 to 41 (CCVSS), 46 to 50 (CCRPT), 51 to 55 (CCQNT), 56 to 60 (CCQPI), 65 to 69 (CCQPS), 70 to 74 (CCSTP), 75 to 79 (CCQPT), 80 to 84 (CCGQT), 129 to 133 (CCRPA), 134 to 138 (CCETT), 139 to 142 (CCRT), and 153 to 157 (CCQPS). A 15 X 5 AA repeats of C-C-[RQVSGE]-[SPSNQ]-[TASPI] region spans residues 8 to 157 (CCQPTCCRTT…TCVSSCCQPS (150 aa)).

This sequence belongs to the KRTAP type 9 family. As to quaternary structure, interacts with hair keratins.

Its function is as follows. In the hair cortex, hair keratin intermediate filaments are embedded in an interfilamentous matrix, consisting of hair keratin-associated proteins (KRTAP), which are essential for the formation of a rigid and resistant hair shaft through their extensive disulfide bond cross-linking with abundant cysteine residues of hair keratins. The matrix proteins include the high-sulfur and high-glycine-tyrosine keratins. The sequence is that of Keratin-associated protein 9-8 (KRTAP9-8) from Homo sapiens (Human).